A 413-amino-acid polypeptide reads, in one-letter code: Cardiolipin synthase B (413 aa).

PLD phosphodiesterase domains follow at residues 108–135 and 285–312; these read VFRR…SSEH and RRRP…DPLS. Catalysis depends on residues H113, K115, D120, H290, K292, and D297. The tract at residues 388–413 is disordered; sequence TQVDPPAQPTMETQDRVETENTGVNP.

This sequence belongs to the phospholipase D family. Cardiolipin synthase subfamily. ClsB sub-subfamily.

It localises to the cell membrane. The enzyme catalyses 2 a 1,2-diacyl-sn-glycero-3-phospho-(1'-sn-glycerol) = a cardiolipin + glycerol. Its function is as follows. Catalyzes the phosphatidyl group transfer from one phosphatidylglycerol molecule to another to form cardiolipin (CL) (diphosphatidylglycerol) and glycerol. This is Cardiolipin synthase B from Shigella flexneri.